A 487-amino-acid chain; its full sequence is Glycogen synthase (487 aa).

Lys19 provides a ligand contact to ADP-alpha-D-glucose.

This sequence belongs to the glycosyltransferase 1 family. Bacterial/plant glycogen synthase subfamily.

It carries out the reaction [(1-&gt;4)-alpha-D-glucosyl](n) + ADP-alpha-D-glucose = [(1-&gt;4)-alpha-D-glucosyl](n+1) + ADP + H(+). It participates in glycan biosynthesis; glycogen biosynthesis. Functionally, synthesizes alpha-1,4-glucan chains using ADP-glucose. The polypeptide is Glycogen synthase (Moorella thermoacetica (strain ATCC 39073 / JCM 9320)).